A 95-amino-acid polypeptide reads, in one-letter code: Small ribosomal subunit protein uS17 (95 aa).

This sequence belongs to the universal ribosomal protein uS17 family. In terms of assembly, part of the 30S ribosomal subunit.

Functionally, one of the primary rRNA binding proteins, it binds specifically to the 5'-end of 16S ribosomal RNA. This is Small ribosomal subunit protein uS17 from Streptomyces coelicolor (strain ATCC BAA-471 / A3(2) / M145).